Reading from the N-terminus, the 249-residue chain is 5'-nucleotidase SurE (249 aa).

A divalent metal cation contacts are provided by D8, D9, S39, and N91.

Belongs to the SurE nucleotidase family. Requires a divalent metal cation as cofactor.

The protein resides in the cytoplasm. The catalysed reaction is a ribonucleoside 5'-phosphate + H2O = a ribonucleoside + phosphate. Its function is as follows. Nucleotidase that shows phosphatase activity on nucleoside 5'-monophosphates. The polypeptide is 5'-nucleotidase SurE (Pseudomonas paraeruginosa (strain DSM 24068 / PA7) (Pseudomonas aeruginosa (strain PA7))).